We begin with the raw amino-acid sequence, 50 residues long: PhoP/PhoQ regulator MgrB (50 aa).

At 1-4 (MLDL) the chain is on the cytoplasmic side. A helical transmembrane segment spans residues 5–27 (NITKLVTTVVIIAACCLFYLLAL). Residues 28–50 (DSYCDQGGTFSTGICAITTIVPW) lie on the Periplasmic side of the membrane.

Belongs to the MgrB family. Probably interacts with the periplasmic domain of PhoQ.

It localises to the cell inner membrane. Its function is as follows. PhoP-regulated transcription is redox-sensitive, being activated when the periplasm becomes more reducing. MgrB acts between DsbA/DsbB and PhoP/PhoQ in this pathway. Represses PhoP/PhoQ signaling, possibly by binding to the periplasmic domain of PhoQ, altering its activity and that of downstream effector PhoP. This Yersinia pestis protein is PhoP/PhoQ regulator MgrB.